Reading from the N-terminus, the 1399-residue chain is DNA-directed RNA polymerase subunit beta' (1399 aa).

Cys-70, Cys-72, Cys-85, and Cys-88 together coordinate Zn(2+). 3 residues coordinate Mg(2+): Asp-460, Asp-462, and Asp-464. Cys-814, Cys-888, Cys-895, and Cys-898 together coordinate Zn(2+).

It belongs to the RNA polymerase beta' chain family. As to quaternary structure, the RNAP catalytic core consists of 2 alpha, 1 beta, 1 beta' and 1 omega subunit. When a sigma factor is associated with the core the holoenzyme is formed, which can initiate transcription. It depends on Mg(2+) as a cofactor. Zn(2+) serves as cofactor.

It carries out the reaction RNA(n) + a ribonucleoside 5'-triphosphate = RNA(n+1) + diphosphate. Functionally, DNA-dependent RNA polymerase catalyzes the transcription of DNA into RNA using the four ribonucleoside triphosphates as substrates. The protein is DNA-directed RNA polymerase subunit beta' of Pseudomonas fluorescens (strain ATCC BAA-477 / NRRL B-23932 / Pf-5).